The sequence spans 368 residues: DNA replication and repair protein RecF (368 aa).

30–37 (GNNAQGKT) is a binding site for ATP.

It belongs to the RecF family.

The protein localises to the cytoplasm. Functionally, the RecF protein is involved in DNA metabolism; it is required for DNA replication and normal SOS inducibility. RecF binds preferentially to single-stranded, linear DNA. It also seems to bind ATP. The sequence is that of DNA replication and repair protein RecF from Streptococcus pyogenes serotype M18 (strain MGAS8232).